A 158-amino-acid chain; its full sequence is Small ribosomal subunit protein uS9 (158 aa).

It belongs to the universal ribosomal protein uS9 family.

The chain is Small ribosomal subunit protein uS9 from Nitrobacter winogradskyi (strain ATCC 25391 / DSM 10237 / CIP 104748 / NCIMB 11846 / Nb-255).